Consider the following 678-residue polypeptide: Protein CASP (678 aa).

Over 1–619 (MAANVGSMFQ…LVLSNKMART (619 aa)) the chain is Cytoplasmic. Coiled-coil stretches lie at residues 67 to 450 (LLKS…QDLS) and 502 to 556 (LSII…FLQS). Ser-586 is modified (phosphoserine). Residues 620–640 (IGFFYTLFLHCLVFLVLYKLA) form a helical; Anchor for type IV membrane protein membrane-spanning segment. Residues 641–678 (WSESMERDCATFCAKKFADHLHKFHENDNGAAAGDLWQ) are Lumenal-facing.

Belongs to the CASP family. Homodimer; disulfide-linked. Interacts with GOLGA5.

It is found in the golgi apparatus membrane. Its function is as follows. May be involved in intra-Golgi retrograde transport. This is Protein CASP (CUX1) from Homo sapiens (Human).